Consider the following 145-residue polypeptide: Deoxyuridine 5'-triphosphate nucleotidohydrolase (145 aa).

Substrate is bound by residues 63–65, Q76, and 80–82; these read RSG and TVD.

This sequence belongs to the dUTPase family. Mg(2+) serves as cofactor.

It carries out the reaction dUTP + H2O = dUMP + diphosphate + H(+). It functions in the pathway pyrimidine metabolism; dUMP biosynthesis; dUMP from dCTP (dUTP route): step 2/2. In terms of biological role, this enzyme is involved in nucleotide metabolism: it produces dUMP, the immediate precursor of thymidine nucleotides and it decreases the intracellular concentration of dUTP so that uracil cannot be incorporated into DNA. This chain is Deoxyuridine 5'-triphosphate nucleotidohydrolase, found in Chlamydia trachomatis serovar L2 (strain ATCC VR-902B / DSM 19102 / 434/Bu).